A 444-amino-acid polypeptide reads, in one-letter code: N-succinylarginine dihydrolase (444 aa).

Residues 19–28, Asn-110, and 137–138 contribute to the substrate site; these read AGLSFGNVAS and HR. The active site involves Glu-174. Arg-214 is a substrate binding site. His-250 is an active-site residue. Substrate contacts are provided by Asp-252 and Asn-362. The active-site Nucleophile is Cys-368.

The protein belongs to the succinylarginine dihydrolase family. As to quaternary structure, homodimer.

It carries out the reaction N(2)-succinyl-L-arginine + 2 H2O + 2 H(+) = N(2)-succinyl-L-ornithine + 2 NH4(+) + CO2. The protein operates within amino-acid degradation; L-arginine degradation via AST pathway; L-glutamate and succinate from L-arginine: step 2/5. Its function is as follows. Catalyzes the hydrolysis of N(2)-succinylarginine into N(2)-succinylornithine, ammonia and CO(2). The sequence is that of N-succinylarginine dihydrolase from Shewanella amazonensis (strain ATCC BAA-1098 / SB2B).